The sequence spans 97 residues: Protein RnfH (97 aa).

It belongs to the UPF0125 (RnfH) family.

The polypeptide is Protein RnfH (Proteus mirabilis (strain HI4320)).